Consider the following 446-residue polypeptide: Butyryl-CoA:acetate CoA-transferase (446 aa).

CoA is bound at residue 220 to 224 (GIGGM). The 5-glutamyl coenzyme A thioester intermediate role is filled by glutamate 245. The CoA site is built by valine 320, glycine 343, and lysine 370.

This sequence belongs to the acetyl-CoA hydrolase/transferase family. Butyryl-CoA CoA-transferase subfamily.

The enzyme catalyses butanoate + acetyl-CoA = butanoyl-CoA + acetate. The catalysed reaction is propanoate + acetyl-CoA = propanoyl-CoA + acetate. It functions in the pathway lipid metabolism; butanoate metabolism. Its function is as follows. Coenzyme A-transferase that converts butyryl-CoA to butyrate. Can also use proprionyl-CoA as substrate in vitro. This is Butyryl-CoA:acetate CoA-transferase from Anaerostipes caccae (strain DSM 14662 / CCUG 47493 / JCM 13470 / NCIMB 13811 / L1-92).